Here is an 831-residue protein sequence, read N- to C-terminus: SID1 transmembrane family member 1 (831 aa).

A signal peptide spans 1 to 19 (MLDCPRLALLCALPWLLRA). The Extracellular segment spans residues 20 to 308 (AVPGHRAEPL…SVKGSVYVKS (289 aa)). Asn-67, Asn-83, Asn-136, and Asn-281 each carry an N-linked (GlcNAc...) asparagine glycan. Residues 309–329 (SLFSVFVFLSFYLGCLLVVFV) form a helical membrane-spanning segment. Topologically, residues 330-441 (HHMRFQRKPV…DRRIVSKKYK (112 aa)) are cytoplasmic. The segment at 354–408 (VSHPITASTPEGSNYGAIDESSSSPGRQMSSSDGGQPCHSDTDSSVEESDFDTMP) is disordered. Residues 374 to 385 (SSSSPGRQMSSS) show a composition bias toward low complexity. Residues 397-408 (SSVEESDFDTMP) are compositionally biased toward acidic residues. The helical transmembrane segment at 442 to 462 (IYFWNIITIAVFYALPVMQLV) threads the bilayer. The Extracellular portion of the chain corresponds to 463-493 (ITYQTVVNVTGNQDICYYNFLCAHPLGVLSA). Asn-470 is a glycosylation site (N-linked (GlcNAc...) asparagine). Residues 494-514 (FNNILSNLGHVLLGFLFLLIV) traverse the membrane as a helical segment. Residues 515 to 540 (LRRDLLHRRALEAKDIFAMEYGIPKH) lie on the Cytoplasmic side of the membrane. Residues 541–561 (FGLFYAMGIALMMEGVLSACY) traverse the membrane as a helical segment. Residues 562–571 (HVCPNYSNFQ) are Extracellular-facing. Asn-566 carries an N-linked (GlcNAc...) asparagine glycan. A helical transmembrane segment spans residues 572 to 589 (FDTSFMYMIAGLCMLKLY). At 590 to 599 (QTRHPDINAS) the chain is on the cytoplasmic side. A helical membrane pass occupies residues 600-620 (AYSAYASFAVVITLTVLGVVF). The Extracellular portion of the chain corresponds to 621 to 625 (GKNDV). Residues 626–646 (WFWIIFSAIHVLASLALSTQI) form a helical membrane-spanning segment. At 647-687 (YYMGRFKIDVSDTDLGIFRRAAMVFYTDCIQQCSRPLYMDR) the chain is on the cytoplasmic side. The chain crosses the membrane as a helical span at residues 688-708 (MVLLIVGNLVNWSFALFGLIY). At 709–714 (RPRDFA) the chain is on the extracellular side. A helical transmembrane segment spans residues 715-735 (SYMLGIFICNLLLYLAFYIIM). Topologically, residues 736 to 745 (KLRSSEKVLP) are cytoplasmic. Residues 746 to 766 (LPVFCIVATAVVWAAALYFFF) traverse the membrane as a helical segment. Residues 767 to 795 (QNLSSWEGTPAESREKNRECVLLGFFDDH) lie on the Extracellular side of the membrane. The N-linked (GlcNAc...) asparagine glycan is linked to Asn-768. The helical transmembrane segment at 796–816 (DIWHFLSATALFFSFLVLLTL) threads the bilayer. Residues 817 to 831 (DDDLDVVRRDQIPVF) are Cytoplasmic-facing.

It belongs to the SID1 family.

It localises to the membrane. Functionally, in vitro binds long double-stranded RNA (dsRNA) (500 and 700 base pairs), but not dsRNA shorter than 300 bp. Not involved in RNA autophagy, a process in which RNA is directly imported into lysosomes in an ATP-dependent manner, and degraded. This is SID1 transmembrane family member 1 (Sidt1) from Rattus norvegicus (Rat).